The sequence spans 466 residues: Adenosylhomocysteinase (466 aa).

The substrate site is built by T57, D132, and E192. Position 193–195 (193–195 (TTT)) interacts with NAD(+). Residues K222 and D226 each coordinate substrate. NAD(+)-binding positions include N227, 256-261 (GYGDVG), E279, N314, 335-337 (IGH), and N380.

This sequence belongs to the adenosylhomocysteinase family. NAD(+) is required as a cofactor.

The protein resides in the cytoplasm. The enzyme catalyses S-adenosyl-L-homocysteine + H2O = L-homocysteine + adenosine. Its pathway is amino-acid biosynthesis; L-homocysteine biosynthesis; L-homocysteine from S-adenosyl-L-homocysteine: step 1/1. Its function is as follows. May play a key role in the regulation of the intracellular concentration of adenosylhomocysteine. In Mesorhizobium japonicum (strain LMG 29417 / CECT 9101 / MAFF 303099) (Mesorhizobium loti (strain MAFF 303099)), this protein is Adenosylhomocysteinase.